A 454-amino-acid polypeptide reads, in one-letter code: Serine/threonine-protein phosphatase C23G10.1 (454 aa).

Mn(2+) contacts are provided by aspartate 196, histidine 198, aspartate 224, and asparagine 256. Histidine 257 (proton donor) is an active-site residue. Residues histidine 308 and histidine 382 each coordinate Mn(2+).

Belongs to the PPP phosphatase family. PP-1 subfamily. Requires Mn(2+) as cofactor.

The enzyme catalyses O-phospho-L-seryl-[protein] + H2O = L-seryl-[protein] + phosphate. The catalysed reaction is O-phospho-L-threonyl-[protein] + H2O = L-threonyl-[protein] + phosphate. This chain is Serine/threonine-protein phosphatase C23G10.1, found in Caenorhabditis elegans.